The primary structure comprises 461 residues: Coronin-1A (461 aa).

Serine 2 bears the N-acetylserine mark. A Phosphoserine; by PKC modification is found at serine 2. WD repeat units lie at residues 13 to 63 (HVFG…LVLP), 73 to 110 (NVPL…MVWE), 123 to 160 (PVVT…LVWD), 164 to 204 (GAAV…RVIE), 207 to 251 (KGTV…ALWD), 258 to 296 (PLSL…RYFE), and 302 to 349 (PFLH…EPIA). The span at 407–418 (NRGLDSARRRAT) shows a compositional bias: basic and acidic residues. The segment at 407–431 (NRGLDSARRRATPEPSSTLSSDTVS) is disordered. Serine 412 bears the Phosphoserine; by PKC mark. A Phosphothreonine modification is found at threonine 418. Polar residues predominate over residues 420 to 430 (EPSSTLSSDTV). Serine 422 is subject to Phosphoserine. A coiled-coil region spans residues 425 to 461 (LSSDTVSRLEEDVRNLNAIVQKLQERLDRLEETVQAK).

Belongs to the WD repeat coronin family. Binds actin. In terms of processing, phosphorylation at Ser-412 by PKC strongly down-regulates the association with actin. Polyubiquitinated by RNF128 with 'Lys-48'-linked chains, leading to proteasomal degradation.

It is found in the cytoplasm. It localises to the cytoskeleton. The protein resides in the cell cortex. Its subcellular location is the cytoplasmic vesicle. The protein localises to the phagosome membrane. Functionally, may be a crucial component of the cytoskeleton of highly motile cells, functioning both in the invagination of large pieces of plasma membrane, as well as in forming protrusions of the plasma membrane involved in cell locomotion. This Rattus norvegicus (Rat) protein is Coronin-1A (Coro1a).